Here is a 340-residue protein sequence, read N- to C-terminus: MGKDYYQTLGLARGASDDEIKRAYRRQALRYHPDKNKEPGAEEKFKEIAEAYDVLSDPRKREIFDRYGEEGLKGGSPSGGSSGGANGTSFSYTFHGDPHAMFAEFFGGRNPFDTFFGQRNGEEGMDIDDTFSSFPMGMGGFTNMNFGRSRPSQEPTRKKQDPPVTHDLRVSLEEIYSGCTKKMKISHKRLNPDGKSIRNEDKILTIEVKRGWKEGTKITFPKEGDQTSNNIPADIVFVLKDKPHNIFKRDGSDVIYPARISLREALCGCTVNVPTLDGRTIPVVFKDVIRPGMRRKVPGEGLPLPKTPEKRGDLVIEFEVIFPERIPVSSRTILEQVLPI.

One can recognise a J domain in the interval 2–70 (GKDYYQTLGL…REIFDRYGEE (69 aa)). The residue at position 307 (threonine 307) is a Phosphothreonine.

In terms of assembly, interacts with DNAJC3. Interacts with HSF1 (via transactivation domain); this interaction results in the inhibition of heat shock- and HSF1-induced transcriptional activity during the attenuation and recovery phase period of the heat shock response. Interacts with BAG3.

The protein localises to the cytoplasm. Its subcellular location is the nucleus. It is found in the nucleolus. In terms of biological role, interacts with HSP70 and can stimulate its ATPase activity. Stimulates the association between HSC70 and HIP. Negatively regulates heat shock-induced HSF1 transcriptional activity during the attenuation and recovery phase period of the heat shock response. Stimulates ATP hydrolysis and the folding of unfolded proteins mediated by HSPA1A/B (in vitro). In Mus musculus (Mouse), this protein is DnaJ homolog subfamily B member 1 (Dnajb1).